We begin with the raw amino-acid sequence, 203 residues long: Thymidylate kinase (203 aa).

10-17 (GIDGAGKS) contacts ATP.

The protein belongs to the thymidylate kinase family.

The catalysed reaction is dTMP + ATP = dTDP + ADP. Functionally, phosphorylation of dTMP to form dTDP in both de novo and salvage pathways of dTTP synthesis. The sequence is that of Thymidylate kinase from Cupriavidus taiwanensis (strain DSM 17343 / BCRC 17206 / CCUG 44338 / CIP 107171 / LMG 19424 / R1) (Ralstonia taiwanensis (strain LMG 19424)).